A 107-amino-acid polypeptide reads, in one-letter code: Multidrug resistance protein mmr (107 aa).

Transmembrane regions (helical) follow at residues 2–19 (IYLY…ATSL), 29–51 (LWPT…LSIS), 58–80 (VAYA…LFLG), and 84–106 (SVMK…LAGA).

The protein belongs to the drug/metabolite transporter (DMT) superfamily. Small multidrug resistance (SMR) (TC 2.A.7.1) family. Mmr subfamily.

Its subcellular location is the cell membrane. Its function is as follows. Multidrug efflux pump. Confers resistance to tetraphenylphosphonium (TPP), erythromycin, ethidium bromide, acriflavine, safranin O and pyronin Y. The protein is Multidrug resistance protein mmr (mmr) of Mycobacterium bovis (strain ATCC BAA-935 / AF2122/97).